Reading from the N-terminus, the 235-residue chain is Aspartate/glutamate leucyltransferase (235 aa).

Belongs to the R-transferase family. Bpt subfamily.

The protein localises to the cytoplasm. The catalysed reaction is N-terminal L-glutamyl-[protein] + L-leucyl-tRNA(Leu) = N-terminal L-leucyl-L-glutamyl-[protein] + tRNA(Leu) + H(+). It carries out the reaction N-terminal L-aspartyl-[protein] + L-leucyl-tRNA(Leu) = N-terminal L-leucyl-L-aspartyl-[protein] + tRNA(Leu) + H(+). Its function is as follows. Functions in the N-end rule pathway of protein degradation where it conjugates Leu from its aminoacyl-tRNA to the N-termini of proteins containing an N-terminal aspartate or glutamate. The protein is Aspartate/glutamate leucyltransferase of Pseudomonas putida (strain GB-1).